We begin with the raw amino-acid sequence, 347 residues long: MIYPVIWQNNCVLLIDQTRLPNEYAVVEIHRSEDMARAIQTMIVRGAPAIGVAAAYGMYLGAREIETGERQEFLQELEKVAQLLRATRPTAVNLFWAISRMQKTAYKTLGTVAQIKENLLQTAQAINAEDLQTCQAIGDNGLAILPKTPEKLTLLTHCNAGALATAGYGTALGVVRSAWREGRLERLFADETRPRLQGAKLTTWECVQEGIPVTLITDNMAAHCMKQGLIHAVVVGADRIAANGDAANKIGTYSLAIVAKAHNVPFFVAAPVSTIDFELADGSQIPIEERNPVEIYQVGDTTLTPPGVKFYNPAFDVTPAELITAIITENGAFAPHVLTKSSQQAVV.

Residues 45–47 (RGA), Arg-88, and Gln-197 contribute to the substrate site. Asp-238 functions as the Proton donor in the catalytic mechanism. 248-249 (NK) contributes to the substrate binding site.

This sequence belongs to the eIF-2B alpha/beta/delta subunits family. MtnA subfamily.

The enzyme catalyses 5-(methylsulfanyl)-alpha-D-ribose 1-phosphate = 5-(methylsulfanyl)-D-ribulose 1-phosphate. Its pathway is amino-acid biosynthesis; L-methionine biosynthesis via salvage pathway; L-methionine from S-methyl-5-thio-alpha-D-ribose 1-phosphate: step 1/6. Its function is as follows. Catalyzes the interconversion of methylthioribose-1-phosphate (MTR-1-P) into methylthioribulose-1-phosphate (MTRu-1-P). This is Methylthioribose-1-phosphate isomerase from Nostoc sp. (strain PCC 7120 / SAG 25.82 / UTEX 2576).